A 515-amino-acid chain; its full sequence is Maturase K (515 aa).

This sequence belongs to the intron maturase 2 family. MatK subfamily.

The protein resides in the plastid. It is found in the chloroplast. Usually encoded in the trnK tRNA gene intron. Probably assists in splicing its own and other chloroplast group II introns. This is Maturase K from Ceratophyllum demersum (Rigid hornwort).